The primary structure comprises 213 residues: MGLTDTQQAILALIAERIETDGVPPSQTEIARAFGFKGVRAAQYHLEALEQAGAIRRVPGQARGIRLAGAAAHARAAPAEEPVRDDVLRLPVLGRVAAGLPIGADIGSDDFVVLDRVFFSPSPDYLLKVQGDSMRDEGIFNGDLIGVHRTRDARSGQIVVARIDEEITVKLLKIGKDRIRLLPRNPDYAPIEVLPDQDFAIEGLYCGLLRPNR.

A DNA-binding region (H-T-H motif) is located at residues 27–47; the sequence is QTEIARAFGFKGVRAAQYHLE. Catalysis depends on for autocatalytic cleavage activity residues S133 and K170.

This sequence belongs to the peptidase S24 family. Homodimer.

It carries out the reaction Hydrolysis of Ala-|-Gly bond in repressor LexA.. Represses a number of genes involved in the response to DNA damage (SOS response), including recA and lexA. In the presence of single-stranded DNA, RecA interacts with LexA causing an autocatalytic cleavage which disrupts the DNA-binding part of LexA, leading to derepression of the SOS regulon and eventually DNA repair. This chain is LexA repressor 2, found in Xanthomonas campestris pv. campestris (strain ATCC 33913 / DSM 3586 / NCPPB 528 / LMG 568 / P 25).